Reading from the N-terminus, the 168-residue chain is MPLLDSFKVDHTRMYAPAVRVAKTMTTPKGDTITVFDLRFCVPNKEILPEKGIHTLEHLFAGFMRDHLNGNGVEIIDISPMGCRTGFYMSLIGTPSEQQVADTWLASMQDVLTVQDQSKIPELNEYQCGTYLMHSLAEAQQIAQNVLARKVAVNKNEELTLDEGLLNA.

Fe cation contacts are provided by H54, H58, and C128.

This sequence belongs to the LuxS family. In terms of assembly, homodimer. Requires Fe cation as cofactor.

The catalysed reaction is S-(5-deoxy-D-ribos-5-yl)-L-homocysteine = (S)-4,5-dihydroxypentane-2,3-dione + L-homocysteine. Involved in the synthesis of autoinducer 2 (AI-2) which is secreted by bacteria and is used to communicate both the cell density and the metabolic potential of the environment. The regulation of gene expression in response to changes in cell density is called quorum sensing. Catalyzes the transformation of S-ribosylhomocysteine (RHC) to homocysteine (HC) and 4,5-dihydroxy-2,3-pentadione (DPD). In Neisseria meningitidis serogroup C (strain 053442), this protein is S-ribosylhomocysteine lyase.